We begin with the raw amino-acid sequence, 79 residues long: Exodeoxyribonuclease 7 small subunit (79 aa).

Belongs to the XseB family. In terms of assembly, heterooligomer composed of large and small subunits.

It localises to the cytoplasm. It catalyses the reaction Exonucleolytic cleavage in either 5'- to 3'- or 3'- to 5'-direction to yield nucleoside 5'-phosphates.. In terms of biological role, bidirectionally degrades single-stranded DNA into large acid-insoluble oligonucleotides, which are then degraded further into small acid-soluble oligonucleotides. This is Exodeoxyribonuclease 7 small subunit from Shouchella clausii (strain KSM-K16) (Alkalihalobacillus clausii).